Reading from the N-terminus, the 157-residue chain is Small ribosomal subunit protein uS7 (157 aa).

The protein belongs to the universal ribosomal protein uS7 family. Part of the 30S ribosomal subunit. Contacts proteins S9 and S11.

One of the primary rRNA binding proteins, it binds directly to 16S rRNA where it nucleates assembly of the head domain of the 30S subunit. Is located at the subunit interface close to the decoding center, probably blocks exit of the E-site tRNA. The sequence is that of Small ribosomal subunit protein uS7 from Caldicellulosiruptor bescii (strain ATCC BAA-1888 / DSM 6725 / KCTC 15123 / Z-1320) (Anaerocellum thermophilum).